Consider the following 30-residue polypeptide: LIM and SH3 domain protein 1 (30 aa).

Methionine 1 carries the post-translational modification N-acetylmethionine. One can recognise an LIM zinc-binding domain in the interval 5–30 (CARCGKIVYPTEKVNCLDKFWHKACF).

As to quaternary structure, interacts with F-actin. Interacts with ANKRD54. Interacts with KBTBD10. Post-translationally, phosphorylated.

Its subcellular location is the cytoplasm. The protein resides in the cell cortex. It is found in the cytoskeleton. Its function is as follows. Plays an important role in the regulation of dynamic actin-based, cytoskeletal activities. Agonist-dependent changes in LASP1 phosphorylation may also serve to regulate actin-associated ion transport activities, not only in the parietal cell but also in certain other F-actin-rich secretory epithelial cell types. This is LIM and SH3 domain protein 1 (LASP1) from Sus scrofa (Pig).